A 130-amino-acid polypeptide reads, in one-letter code: Secreted cysteine-rich effector 2 (130 aa).

The first 23 residues, Met-1–Ala-23, serve as a signal peptide directing secretion. The segment at Leu-68–Val-85 is plant immunity suppression domain.

It is found in the secreted. It localises to the host cell. The protein resides in the host periplasm. Its function is as follows. Secreted effector required for full virulence of U.virens. Inhibits host pathogen-associated molecular pattern-triggered immunity including flg22- and chitin-induced defense gene expression and oxidative burst. This chain is Secreted cysteine-rich effector 2, found in Ustilaginoidea virens (Rice false smut fungus).